We begin with the raw amino-acid sequence, 136 residues long: Regulator of nucleoside diphosphate kinase (136 aa).

This sequence belongs to the Rnk family. As to quaternary structure, interacts with the RNA polymerase.

In terms of biological role, may act as an anti-Gre factor. The polypeptide is Regulator of nucleoside diphosphate kinase (Escherichia coli O6:H1 (strain CFT073 / ATCC 700928 / UPEC)).